A 514-amino-acid polypeptide reads, in one-letter code: Pantothenate transporter liz1 (514 aa).

The next 12 membrane-spanning stretches (helical) occupy residues 24 to 44, 72 to 92, 98 to 118, 128 to 148, 159 to 179, 194 to 214, 263 to 283, 300 to 320, 329 to 349, 357 to 377, 390 to 410, and 423 to 443; these read LLIK…FINY, INVV…YALQ, LWFS…FAVH, FFMA…LGAW, GIFS…QTAV, WLFI…LFLF, GLCI…NVLM, NYPT…SVIS, WPFG…LLAW, FFAY…FSWA, VVVF…APIM, and LIGL…VSYM.

The protein belongs to the major facilitator superfamily. Allantoate permease family.

The protein localises to the cell membrane. Its function is as follows. Transports pantothenate into the cell. The polypeptide is Pantothenate transporter liz1 (liz1) (Schizosaccharomyces pombe (strain 972 / ATCC 24843) (Fission yeast)).